The primary structure comprises 340 residues: Guanine nucleotide-binding protein G(I)/G(S)/G(T) subunit beta-1 (340 aa).

N-acetylserine is present on Ser2. Ser2 carries the phosphoserine modification. 7 WD repeats span residues 46-94 (RTRR…HAIP), 95-140 (LRSS…RELA), 141-181 (GHTG…TTFT), 182-223 (GHTG…QTFT), 224-267 (GHES…YSHD), 268-309 (NIIC…GVLA), and 310-340 (GHDN…KIWN). A Phosphohistidine modification is found at His266.

It belongs to the WD repeat G protein beta family. As to quaternary structure, g proteins are composed of 3 units, alpha, beta and gamma. The heterodimer formed by GNB1 and GNG2 interacts with ARHGEF5. The heterodimer formed by GNB1 and GNG2 interacts with GRK2. Forms a complex with GNAO1 and GNG3. Interacts with ARHGEF18 and RASD2. Forms complexes with TAS2R14 and G-proteins; these complexes play a role in the perception of bitterness. Component of the TAS2R14-GNAI1 complex, consisting of TAS2R14, GNAI1, GNB1 and GNG2. Component of the TAS2R14-GNAT3 complex, consisting of TAS2R14, GNAT3, GNB1 and GNG2. Component of the TAS2R14-GNAS2 complex, consisting of TAS2R14, GNAS2, GNB1 and GNG2. In terms of processing, phosphorylation at His-266 by NDKB contributes to G protein activation by increasing the high energetic phosphate transfer onto GDP.

Functionally, guanine nucleotide-binding proteins (G proteins) are involved as a modulator or transducer in various transmembrane signaling systems. The beta and gamma chains are required for the GTPase activity, for replacement of GDP by GTP, and for G protein-effector interaction. The protein is Guanine nucleotide-binding protein G(I)/G(S)/G(T) subunit beta-1 (GNB1) of Cricetulus griseus (Chinese hamster).